Here is a 124-residue protein sequence, read N- to C-terminus: KETSAQKFERQHMDSTGSSSSSPTYCNQMMKRREMTQGYCKPVNTFVHEPLADVQAVCSQENVTCKNGNSNCYKSRSALHITDCRLKGNSKYPNCDYQTSQLQKQVIVACEGSPFVPVHFDASV.

Basic and acidic residues predominate over residues 1-13 (KETSAQKFERQHM). A disordered region spans residues 1–25 (KETSAQKFERQHMDSTGSSSSSPTY). Substrate-binding residues include K7 and R10. H12 acts as the Proton acceptor in catalysis. 4 disulfides stabilise this stretch: C26–C84, C40–C95, C58–C110, and C65–C72. Residues 41-45 (KPVNT), K66, and R85 each bind substrate. The Proton donor role is filled by H119.

This sequence belongs to the pancreatic ribonuclease family. As to quaternary structure, monomer. Interacts with and forms tight 1:1 complexes with RNH1. Dimerization of two such complexes may occur. Interaction with RNH1 inhibits this protein. In terms of tissue distribution, pancreas.

It is found in the secreted. It carries out the reaction an [RNA] containing cytidine + H2O = an [RNA]-3'-cytidine-3'-phosphate + a 5'-hydroxy-ribonucleotide-3'-[RNA].. The catalysed reaction is an [RNA] containing uridine + H2O = an [RNA]-3'-uridine-3'-phosphate + a 5'-hydroxy-ribonucleotide-3'-[RNA].. Its function is as follows. Endonuclease that catalyzes the cleavage of RNA on the 3' side of pyrimidine nucleotides. Acts on single-stranded and double-stranded RNA. This chain is Ribonuclease pancreatic (RNASE1), found in Ondatra zibethicus (Muskrat).